The sequence spans 311 residues: MANPLYQKHIISINDLSRAELELVLETAAKLKANPQPELLKHKVIASCFFEASTRTRLSFETSMHRLGAAVVGFSDSSNTSLGKKGETLADTISVISTYVDAIVMRHPQEGAARLATEFSGGVPVLNAGDGANQHPTQTLLDLFTIQETQGRLENLTIAMVGDLKYGRTVHSLAQALAKFNGNRFCFIAPDALAMPQYILDMLDEKGIPWSLHSAIEDVVQEVDILYMTRVQKERLDPSEYANVKAQFVLRAADLQGARANMKVLHPLPRIDEITTDVDKTPHAWYFQQAGNGIFARQALLALVLNRDLAL.

Residues R55 and T56 each coordinate carbamoyl phosphate. Position 85 (K85) interacts with L-aspartate. Positions 106, 135, and 138 each coordinate carbamoyl phosphate. L-aspartate contacts are provided by R168 and R230. Carbamoyl phosphate contacts are provided by L268 and P269.

It belongs to the aspartate/ornithine carbamoyltransferase superfamily. ATCase family. Heterododecamer (2C3:3R2) of six catalytic PyrB chains organized as two trimers (C3), and six regulatory PyrI chains organized as three dimers (R2).

The enzyme catalyses carbamoyl phosphate + L-aspartate = N-carbamoyl-L-aspartate + phosphate + H(+). Its pathway is pyrimidine metabolism; UMP biosynthesis via de novo pathway; (S)-dihydroorotate from bicarbonate: step 2/3. Catalyzes the condensation of carbamoyl phosphate and aspartate to form carbamoyl aspartate and inorganic phosphate, the committed step in the de novo pyrimidine nucleotide biosynthesis pathway. This Cronobacter sakazakii (strain ATCC BAA-894) (Enterobacter sakazakii) protein is Aspartate carbamoyltransferase catalytic subunit.